We begin with the raw amino-acid sequence, 207 residues long: Alpha-1-acid glycoprotein 2 (207 aa).

The signal sequence occupies residues 1 to 18; sequence MALHMILVMVSLLPLLEA. The residue at position 19 (Gln19) is a Pyrrolidone carboxylic acid. N-linked (GlcNAc...) asparagine glycans are attached at residues Asn25, Asn34, Asn76, Asn94, and Asn104. Cys91 and Cys184 are disulfide-bonded. The segment at 188 to 207 is disordered; sequence EKQQLELEKETKKDPEEGQA.

It belongs to the calycin superfamily. Lipocalin family. As to expression, expressed by the liver and secreted in plasma.

It localises to the secreted. In terms of biological role, functions as a transport protein in the blood stream. Binds various ligands in the interior of its beta-barrel domain. Appears to function in modulating the activity of the immune system during the acute-phase reaction. This is Alpha-1-acid glycoprotein 2 (Orm2) from Mus musculus (Mouse).